We begin with the raw amino-acid sequence, 298 residues long: Acetylglutamate kinase (298 aa).

Residues 68–69, R90, and N195 contribute to the substrate site; that span reads GG.

Belongs to the acetylglutamate kinase family. ArgB subfamily.

The protein resides in the cytoplasm. The enzyme catalyses N-acetyl-L-glutamate + ATP = N-acetyl-L-glutamyl 5-phosphate + ADP. The protein operates within amino-acid biosynthesis; L-arginine biosynthesis; N(2)-acetyl-L-ornithine from L-glutamate: step 2/4. Catalyzes the ATP-dependent phosphorylation of N-acetyl-L-glutamate. The sequence is that of Acetylglutamate kinase from Hydrogenovibrio crunogenus (strain DSM 25203 / XCL-2) (Thiomicrospira crunogena).